The chain runs to 95 residues: Co-chaperonin GroES (95 aa).

Belongs to the GroES chaperonin family. As to quaternary structure, heptamer of 7 subunits arranged in a ring. Interacts with the chaperonin GroEL.

It is found in the cytoplasm. Together with the chaperonin GroEL, plays an essential role in assisting protein folding. The GroEL-GroES system forms a nano-cage that allows encapsulation of the non-native substrate proteins and provides a physical environment optimized to promote and accelerate protein folding. GroES binds to the apical surface of the GroEL ring, thereby capping the opening of the GroEL channel. This is Co-chaperonin GroES from Streptococcus mutans serotype c (strain ATCC 700610 / UA159).